We begin with the raw amino-acid sequence, 209 residues long: Thiamine-phosphate synthase (209 aa).

4-amino-2-methyl-5-(diphosphooxymethyl)pyrimidine contacts are provided by residues Gln-41–Lys-45 and Asn-73. Asp-74 and Asp-93 together coordinate Mg(2+). Ser-112 is a 4-amino-2-methyl-5-(diphosphooxymethyl)pyrimidine binding site. A 2-[(2R,5Z)-2-carboxy-4-methylthiazol-5(2H)-ylidene]ethyl phosphate-binding site is contributed by Ser-139–Thr-141. Lys-142 serves as a coordination point for 4-amino-2-methyl-5-(diphosphooxymethyl)pyrimidine. Position 168 (Gly-168) interacts with 2-[(2R,5Z)-2-carboxy-4-methylthiazol-5(2H)-ylidene]ethyl phosphate.

Belongs to the thiamine-phosphate synthase family. Requires Mg(2+) as cofactor.

The catalysed reaction is 2-[(2R,5Z)-2-carboxy-4-methylthiazol-5(2H)-ylidene]ethyl phosphate + 4-amino-2-methyl-5-(diphosphooxymethyl)pyrimidine + 2 H(+) = thiamine phosphate + CO2 + diphosphate. It carries out the reaction 2-(2-carboxy-4-methylthiazol-5-yl)ethyl phosphate + 4-amino-2-methyl-5-(diphosphooxymethyl)pyrimidine + 2 H(+) = thiamine phosphate + CO2 + diphosphate. It catalyses the reaction 4-methyl-5-(2-phosphooxyethyl)-thiazole + 4-amino-2-methyl-5-(diphosphooxymethyl)pyrimidine + H(+) = thiamine phosphate + diphosphate. It functions in the pathway cofactor biosynthesis; thiamine diphosphate biosynthesis; thiamine phosphate from 4-amino-2-methyl-5-diphosphomethylpyrimidine and 4-methyl-5-(2-phosphoethyl)-thiazole: step 1/1. Its function is as follows. Condenses 4-methyl-5-(beta-hydroxyethyl)thiazole monophosphate (THZ-P) and 2-methyl-4-amino-5-hydroxymethyl pyrimidine pyrophosphate (HMP-PP) to form thiamine monophosphate (TMP). The protein is Thiamine-phosphate synthase of Methylobacillus flagellatus (strain ATCC 51484 / DSM 6875 / VKM B-1610 / KT).